We begin with the raw amino-acid sequence, 514 residues long: Maturase K (514 aa).

It belongs to the intron maturase 2 family. MatK subfamily.

Its subcellular location is the plastid. It is found in the chloroplast. Functionally, usually encoded in the trnK tRNA gene intron. Probably assists in splicing its own and other chloroplast group II introns. The protein is Maturase K of Acer palmatum (Japanese maple).